Consider the following 166-residue polypeptide: NADH-quinone oxidoreductase subunit B (166 aa).

4 residues coordinate [4Fe-4S] cluster: Cys44, Cys45, Cys110, and Cys140.

The protein belongs to the complex I 20 kDa subunit family. As to quaternary structure, NDH-1 is composed of 14 different subunits. Subunits NuoB, C, D, E, F, and G constitute the peripheral sector of the complex. Requires [4Fe-4S] cluster as cofactor.

Its subcellular location is the cell membrane. It carries out the reaction a quinone + NADH + 5 H(+)(in) = a quinol + NAD(+) + 4 H(+)(out). Its function is as follows. NDH-1 shuttles electrons from NADH, via FMN and iron-sulfur (Fe-S) centers, to quinones in the respiratory chain. The immediate electron acceptor for the enzyme in this species is believed to be a menaquinone. Couples the redox reaction to proton translocation (for every two electrons transferred, four hydrogen ions are translocated across the cytoplasmic membrane), and thus conserves the redox energy in a proton gradient. This chain is NADH-quinone oxidoreductase subunit B, found in Carboxydothermus hydrogenoformans (strain ATCC BAA-161 / DSM 6008 / Z-2901).